Here is a 157-residue protein sequence, read N- to C-terminus: SsrA-binding protein (157 aa).

The disordered stretch occupies residues 131 to 157 (KQLHDKRDTEKKRDWSREKGRIMRARG). A compositionally biased stretch (basic and acidic residues) spans 132 to 151 (QLHDKRDTEKKRDWSREKGR).

Belongs to the SmpB family.

The protein resides in the cytoplasm. Its function is as follows. Required for rescue of stalled ribosomes mediated by trans-translation. Binds to transfer-messenger RNA (tmRNA), required for stable association of tmRNA with ribosomes. tmRNA and SmpB together mimic tRNA shape, replacing the anticodon stem-loop with SmpB. tmRNA is encoded by the ssrA gene; the 2 termini fold to resemble tRNA(Ala) and it encodes a 'tag peptide', a short internal open reading frame. During trans-translation Ala-aminoacylated tmRNA acts like a tRNA, entering the A-site of stalled ribosomes, displacing the stalled mRNA. The ribosome then switches to translate the ORF on the tmRNA; the nascent peptide is terminated with the 'tag peptide' encoded by the tmRNA and targeted for degradation. The ribosome is freed to recommence translation, which seems to be the essential function of trans-translation. This Rhodopseudomonas palustris (strain BisB18) protein is SsrA-binding protein.